A 152-amino-acid chain; its full sequence is Snaclec 5 (152 aa).

The first 23 residues, methionine 1–alanine 23, serve as a signal peptide directing secretion. Intrachain disulfides connect cysteine 27-cysteine 38, cysteine 55-cysteine 148, and cysteine 123-cysteine 140. Positions tyrosine 34–lysine 149 constitute a C-type lectin domain.

It belongs to the snaclec family. Heterodimer; disulfide-linked. Expressed by the venom gland.

It is found in the secreted. Functionally, interferes with one step of hemostasis (modulation of platelet aggregation, or coagulation cascade, for example). The chain is Snaclec 5 from Bitis arietans (African puff adder).